Consider the following 255-residue polypeptide: Expansin-A25 (255 aa).

A signal peptide spans 1–26; the sequence is MEYAILFATSLVITVLAASGFAPAHG. The 116-residue stretch at 45–160 folds into the Expansin-like EG45 domain; it reads GGACGYGNLY…QQVKCWRQGG (116 aa). Residues 170 to 249 form the Expansin-like CBD domain; it reads FFELVLVSNV…WWSFGMTFTS (80 aa).

The protein belongs to the expansin family. Expansin A subfamily. In terms of tissue distribution, expressed in panicles and flowers.

The protein resides in the secreted. The protein localises to the cell wall. Its subcellular location is the membrane. Its function is as follows. May cause loosening and extension of plant cell walls by disrupting non-covalent bonding between cellulose microfibrils and matrix glucans. No enzymatic activity has been found. May be required for rapid internodal elongation in deepwater rice during submergence. The polypeptide is Expansin-A25 (EXPA25) (Oryza sativa subsp. japonica (Rice)).